Here is a 317-residue protein sequence, read N- to C-terminus: Transaldolase (317 aa).

Lys-132 acts as the Schiff-base intermediate with substrate in catalysis.

Belongs to the transaldolase family. Type 1 subfamily. In terms of assembly, homodimer.

It localises to the cytoplasm. The catalysed reaction is D-sedoheptulose 7-phosphate + D-glyceraldehyde 3-phosphate = D-erythrose 4-phosphate + beta-D-fructose 6-phosphate. Its pathway is carbohydrate degradation; pentose phosphate pathway; D-glyceraldehyde 3-phosphate and beta-D-fructose 6-phosphate from D-ribose 5-phosphate and D-xylulose 5-phosphate (non-oxidative stage): step 2/3. In terms of biological role, transaldolase is important for the balance of metabolites in the pentose-phosphate pathway. The polypeptide is Transaldolase (Mannheimia succiniciproducens (strain KCTC 0769BP / MBEL55E)).